A 248-amino-acid chain; its full sequence is UPF0246 protein A1G_03985 (248 aa).

The protein belongs to the UPF0246 family.

This chain is UPF0246 protein A1G_03985, found in Rickettsia rickettsii (strain Sheila Smith).